Here is a 380-residue protein sequence, read N- to C-terminus: Putative 8-amino-7-oxononanoate synthase (380 aa).

Arginine 18 provides a ligand contact to substrate. Residue 105–106 (GY) participates in pyridoxal 5'-phosphate binding. Histidine 130 is a binding site for substrate. Pyridoxal 5'-phosphate is bound by residues serine 178, 204–207 (DEAH), and 235–238 (TFGK). Lysine 238 is modified (N6-(pyridoxal phosphate)lysine). Threonine 352 lines the substrate pocket.

It belongs to the class-II pyridoxal-phosphate-dependent aminotransferase family. BioF subfamily. In terms of assembly, homodimer. Requires pyridoxal 5'-phosphate as cofactor.

The enzyme catalyses 6-carboxyhexanoyl-[ACP] + L-alanine + H(+) = (8S)-8-amino-7-oxononanoate + holo-[ACP] + CO2. It functions in the pathway cofactor biosynthesis; biotin biosynthesis. Its function is as follows. Catalyzes the decarboxylative condensation of pimeloyl-[acyl-carrier protein] and L-alanine to produce 8-amino-7-oxononanoate (AON), [acyl-carrier protein], and carbon dioxide. The chain is Putative 8-amino-7-oxononanoate synthase (bioF) from Glaesserella parasuis serovar 5 (strain SH0165) (Haemophilus parasuis).